We begin with the raw amino-acid sequence, 401 residues long: Acetate kinase (401 aa).

Asn9 is a Mg(2+) binding site. Lys16 is a binding site for ATP. Residue Arg88 coordinates substrate. Catalysis depends on Asp147, which acts as the Proton donor/acceptor. ATP contacts are provided by residues 207–211 (HLGNG), 282–284 (DCR), and 333–337 (GIGEN). Glu388 is a binding site for Mg(2+).

The protein belongs to the acetokinase family. As to quaternary structure, homodimer. Requires Mg(2+) as cofactor. Mn(2+) is required as a cofactor.

It is found in the cytoplasm. It catalyses the reaction acetate + ATP = acetyl phosphate + ADP. It functions in the pathway metabolic intermediate biosynthesis; acetyl-CoA biosynthesis; acetyl-CoA from acetate: step 1/2. Functionally, catalyzes the formation of acetyl phosphate from acetate and ATP. Can also catalyze the reverse reaction. The polypeptide is Acetate kinase (Haemophilus influenzae (strain PittEE)).